The following is a 141-amino-acid chain: Glutamyl-tRNA(Gln) amidotransferase subunit C, chloroplastic/mitochondrial (141 aa).

Belongs to the GatC family. Subunit of the heterotrimeric GatCAB amidotransferase (AdT) complex, composed of A, B and C subunits.

The protein resides in the mitochondrion. It localises to the plastid. Its subcellular location is the chloroplast. The catalysed reaction is L-glutamyl-tRNA(Gln) + L-glutamine + ATP + H2O = L-glutaminyl-tRNA(Gln) + L-glutamate + ADP + phosphate + H(+). In terms of biological role, allows the formation of correctly charged Gln-tRNA(Gln) through the transamidation of misacylated Glu-tRNA(Gln) in chloroplasts and mitochondria. The reaction takes place in the presence of glutamine and ATP through an activated gamma-phospho-Glu-tRNA(Gln). In Populus trichocarpa (Western balsam poplar), this protein is Glutamyl-tRNA(Gln) amidotransferase subunit C, chloroplastic/mitochondrial.